The primary structure comprises 161 residues: PHD finger-containing protein 4 (161 aa).

The PHD-type zinc finger occupies 30–80; sequence KKPCEVCGSNANDHAIMTCFLCRDTREHIYCARVHLRSVPRMWICEECRMN. Residues Cys-33, Cys-36, Cys-48, Cys-51, His-57, Cys-60, Cys-74, and Cys-77 each coordinate Zn(2+). The segment covering 114–132 has biased composition (polar residues); that stretch reads TMTSSDSGNQISATHQQPP. The interval 114–161 is disordered; that stretch reads TMTSSDSGNQISATHQQPPQAHASPVAVPMDTSSSDNQQPPSDSESAI. The segment covering 146-161 has biased composition (low complexity); that stretch reads SSSDNQQPPSDSESAI.

Interacts directly with AIPP3/BDT1.

Together with AIPP3/BDT1, cooperates to form a BAH-PHD bivalent histone reader complex able to read histone H3 lysine 27 trimethylation (H3K27me3) histone marks in order to regulate transcription, especially to prevent early flowering; promotes AIPP3/BDT1 binding to H3K27me3. This is PHD finger-containing protein 4 from Arabidopsis thaliana (Mouse-ear cress).